We begin with the raw amino-acid sequence, 288 residues long: Hemin import ATP-binding protein HmuV (288 aa).

Positions 31–269 constitute an ABC transporter domain; the sequence is LRARGLVVER…DLLTRVYQHP (239 aa). 68–75 serves as a coordination point for ATP; sequence GPNGAGKS.

The protein belongs to the ABC transporter superfamily. Heme (hemin) importer (TC 3.A.1.14.5) family. In terms of assembly, the complex is composed of two ATP-binding proteins (HmuV), two transmembrane proteins (HmuU) and a solute-binding protein (HmuT).

It localises to the cell membrane. In terms of biological role, part of the ABC transporter complex HmuTUV involved in hemin import. Responsible for energy coupling to the transport system. The chain is Hemin import ATP-binding protein HmuV from Nocardia farcinica (strain IFM 10152).